Here is a 416-residue protein sequence, read N- to C-terminus: Counting factor 60 (416 aa).

A signal peptide spans 1–22 (MIKKSALITLFLVSLILGVSLS). N-linked (GlcNAc...) asparagine glycans are attached at residues N110, N218, N231, N318, and N411.

The protein belongs to the histidine acid phosphatase family. In terms of assembly, component of the counting factor (CF) complex, which includes cf60, cf50, cf45-1 and ctnA.

Its subcellular location is the secreted. Cell-counting factor that limits the maximum size of the multicellular structure. Does not possess acid phosphatase activity. Cells with decreased levels of this protein form large groups while cells overexpressing this protein form small groups. The chain is Counting factor 60 (cf60) from Dictyostelium discoideum (Social amoeba).